Consider the following 192-residue polypeptide: 7-methyl-GTP pyrophosphatase (192 aa).

Residue Asp-69 is the Proton acceptor of the active site.

Belongs to the Maf family. YceF subfamily. A divalent metal cation serves as cofactor.

It localises to the cytoplasm. It carries out the reaction N(7)-methyl-GTP + H2O = N(7)-methyl-GMP + diphosphate + H(+). Its function is as follows. Nucleoside triphosphate pyrophosphatase that hydrolyzes 7-methyl-GTP (m(7)GTP). May have a dual role in cell division arrest and in preventing the incorporation of modified nucleotides into cellular nucleic acids. The sequence is that of 7-methyl-GTP pyrophosphatase from Methylobacillus flagellatus (strain ATCC 51484 / DSM 6875 / VKM B-1610 / KT).